A 327-amino-acid chain; its full sequence is D-alanine--D-alanine ligase (327 aa).

The ATP-grasp domain maps to 113–312; that stretch reads KRLWMTHGLA…YEDFVLQVLA (200 aa). 139 to 194 lines the ATP pocket; it reads VADLGLPLIVKPAREGSSIGLTKVTAADQMRAAFDKAAALDNDVIAETFVDGAELT. The Mg(2+) site is built by Asp266, Glu279, and Asn281.

Belongs to the D-alanine--D-alanine ligase family. The cofactor is Mg(2+). Mn(2+) serves as cofactor.

The protein localises to the cytoplasm. The enzyme catalyses 2 D-alanine + ATP = D-alanyl-D-alanine + ADP + phosphate + H(+). Its pathway is cell wall biogenesis; peptidoglycan biosynthesis. Cell wall formation. This is D-alanine--D-alanine ligase from Cupriavidus taiwanensis (strain DSM 17343 / BCRC 17206 / CCUG 44338 / CIP 107171 / LMG 19424 / R1) (Ralstonia taiwanensis (strain LMG 19424)).